A 60-amino-acid polypeptide reads, in one-letter code: Acrosin (60 aa).

N3 carries N-linked (GlcNAc...) asparagine glycosylation. In terms of domain architecture, Peptidase S1 spans 24–60 (IIGGQDAAHGSWPWMVSLQIFTYHNNRRYHVCGGSLL).

It belongs to the peptidase S1 family. In terms of assembly, heavy chain (catalytic) and a light chain linked by two disulfide bonds. Forms a heterodimer with SERPINA5.

It carries out the reaction Preferential cleavage: Arg-|-Xaa, Lys-|-Xaa.. Its activity is regulated as follows. Inhibited by SERPINA5. Its function is as follows. Acrosin is the major protease of mammalian spermatozoa. It is a serine protease of trypsin-like cleavage specificity, it is synthesized in a zymogen form, proacrosin and stored in the acrosome. The sequence is that of Acrosin (ACR) from Capra hircus (Goat).